The chain runs to 961 residues: DNA replication licensing factor MCM2 (961 aa).

Residues 1–17 show a composition bias toward polar residues; it reads MDDSENNAPSTPGSPGF. Disordered regions lie at residues 1 to 81 and 120 to 220; these read MDDS…FNDN and AEAE…EEDE. The span at 39-78 shows a compositional bias: acidic residues; it reads SDDDDDDVVGAEEAEVDPNVLPEDDGVVAAEEEEDGEDLF. Basic and acidic residues-rich tracts occupy residues 120–146 and 166–176; these read AEAELDARDVRTGAAPDRKLPRMLHDQ and PPREPRTPRSD. Residues 205–220 show a composition bias toward acidic residues; the sequence is QTDDDPYEDEFDEEDE. The C4-type zinc finger occupies 380–406; sequence CSKCGTVLGPFFQNSYTEVKVGSCPEC. Residues 524–730 form the MCM domain; sequence IGERIVKSIA…FTDEMLARFV (207 aa). 574–581 is an ATP binding site; the sequence is GDPGTAKS. An Arginine finger motif is present at residues 706–709; it reads SRFD.

The protein belongs to the MCM family. Component of the minichromosome maintenance (MCM) complex, a heterotetramer composed of MCM2, MCM3, MCM4, MCM5, MCM6 and MCM7. Interacts with CSN5. In terms of tissue distribution, widely expressed, with higher expression in developing tissues.

It is found in the nucleus. It catalyses the reaction ATP + H2O = ADP + phosphate + H(+). Its function is as follows. Probable component of the MCM2-7 complex (MCM complex) that may function as a DNA helicase and which is essential to undergo a single round of replication initiation and elongation per cell cycle in eukaryotic cells. Can complement the fission yeast mcm2 mutant. The protein is DNA replication licensing factor MCM2 of Oryza sativa subsp. japonica (Rice).